The following is an 871-amino-acid chain: Probable receptor-like protein kinase At2g21480 (871 aa).

Positions methionine 1–alanine 39 are cleaved as a signal peptide. Residues valine 40 to glycine 439 lie on the Extracellular side of the membrane. 5 N-linked (GlcNAc...) asparagine glycosylation sites follow: asparagine 169, asparagine 182, asparagine 253, asparagine 316, and asparagine 381. The chain crosses the membrane as a helical span at residues methionine 440–valine 460. Residues tyrosine 461–arginine 871 are Cytoplasmic-facing. The region spanning phenylalanine 525–alanine 797 is the Protein kinase domain. ATP is bound by residues isoleucine 531 to valine 539 and lysine 553. Aspartate 649 serves as the catalytic Proton acceptor. The disordered stretch occupies residues lysine 808–arginine 871. Positions proline 817–glutamate 839 are enriched in low complexity. Residues aspartate 854–arginine 871 are compositionally biased toward polar residues.

Belongs to the protein kinase superfamily. Ser/Thr protein kinase family.

It localises to the membrane. This is Probable receptor-like protein kinase At2g21480 from Arabidopsis thaliana (Mouse-ear cress).